The chain runs to 349 residues: DNA replication and repair protein RecF (349 aa).

An ATP-binding site is contributed by 30 to 37; that stretch reads GKNGSGKT.

The protein belongs to the RecF family.

The protein localises to the cytoplasm. The RecF protein is involved in DNA metabolism; it is required for DNA replication and normal SOS inducibility. RecF binds preferentially to single-stranded, linear DNA. It also seems to bind ATP. This chain is DNA replication and repair protein RecF, found in Francisella tularensis subsp. mediasiatica (strain FSC147).